A 152-amino-acid polypeptide reads, in one-letter code: Transcriptional regulator MraZ (152 aa).

SpoVT-AbrB domains lie at 5–52 (ATLV…PLPE) and 81–124 (ASEC…DETT).

This sequence belongs to the MraZ family. As to quaternary structure, forms oligomers.

The protein localises to the cytoplasm. It is found in the nucleoid. Its function is as follows. Negatively regulates its own expression and that of the subsequent genes in the proximal part of the division and cell wall (dcw) gene cluster. Acts by binding directly to DNA. May also regulate the expression of genes outside the dcw cluster. The chain is Transcriptional regulator MraZ from Shigella sonnei (strain Ss046).